A 534-amino-acid chain; its full sequence is CTP synthase (534 aa).

The interval 1 to 267 is amidoligase domain; sequence MTKYIFVTGG…DQIVCDHLKL (267 aa). Residue serine 13 coordinates CTP. Residue serine 13 coordinates UTP. 14 to 19 is an ATP binding site; that stretch reads SIGKGI. L-glutamine is bound at residue tyrosine 54. Residue aspartate 71 participates in ATP binding. Mg(2+)-binding residues include aspartate 71 and glutamate 141. CTP contacts are provided by residues 148–150, 188–193, and lysine 224; these read DIE and KTKPTQ. Residues 188–193 and lysine 224 contribute to the UTP site; that span reads KTKPTQ. Position 240-242 (240-242) interacts with ATP; that stretch reads RNV. In terms of domain architecture, Glutamine amidotransferase type-1 spans 292-534; that stretch reads KIALVGKYVE…FVTAAIKNSN (243 aa). An L-glutamine-binding site is contributed by glycine 354. The Nucleophile; for glutamine hydrolysis role is filled by cysteine 381. L-glutamine-binding positions include 382-385, glutamate 405, and arginine 463; that span reads LGMQ. Active-site residues include histidine 508 and glutamate 510.

Belongs to the CTP synthase family. In terms of assembly, homotetramer.

The enzyme catalyses UTP + L-glutamine + ATP + H2O = CTP + L-glutamate + ADP + phosphate + 2 H(+). It carries out the reaction L-glutamine + H2O = L-glutamate + NH4(+). It catalyses the reaction UTP + NH4(+) + ATP = CTP + ADP + phosphate + 2 H(+). It participates in pyrimidine metabolism; CTP biosynthesis via de novo pathway; CTP from UDP: step 2/2. Its activity is regulated as follows. Allosterically activated by GTP, when glutamine is the substrate; GTP has no effect on the reaction when ammonia is the substrate. The allosteric effector GTP functions by stabilizing the protein conformation that binds the tetrahedral intermediate(s) formed during glutamine hydrolysis. Inhibited by the product CTP, via allosteric rather than competitive inhibition. Functionally, catalyzes the ATP-dependent amination of UTP to CTP with either L-glutamine or ammonia as the source of nitrogen. Regulates intracellular CTP levels through interactions with the four ribonucleotide triphosphates. The protein is CTP synthase of Streptococcus pyogenes serotype M28 (strain MGAS6180).